The sequence spans 324 residues: Signal peptidase I (324 aa).

The Periplasmic segment spans residues 1-3; that stretch reads MAN. Residues 4–22 form a helical membrane-spanning segment; sequence MFALILVIATLVTGILWCV. The Cytoplasmic portion of the chain corresponds to 23–58; sequence DKFVFAPKRRARQAAAQTASGDALDNATLNKVAPKP. A helical transmembrane segment spans residues 59–77; it reads GWLETGASVFPVLAIVLIV. Over 78–324 the chain is Periplasmic; the sequence is RSFLYEPFQI…VRLSRIGGIH (247 aa). Active-site residues include serine 91 and lysine 146.

The protein belongs to the peptidase S26 family.

It is found in the cell inner membrane. The enzyme catalyses Cleavage of hydrophobic, N-terminal signal or leader sequences from secreted and periplasmic proteins.. In Salmonella typhi, this protein is Signal peptidase I (lepB).